The primary structure comprises 117 residues: Immunoglobulin kappa variable 1-17 (117 aa).

Positions 1–22 (MDMRVPAQLLGLLLLWFPGARC) are cleaved as a signal peptide. Positions 23–45 (DIQMTQSPSSLSASVGDRVTITC) are framework-1. An Ig-like domain is found at 24–117 (IQMTQSPSSL…YYCLQHNSYP (94 aa)). Cys-45 and Cys-110 are disulfide-bonded. Residues 46 to 56 (RASQGIRNDLG) form a complementarity-determining-1 region. Positions 57-71 (WYQQKPGKAPKRLIY) are framework-2. The interval 72–78 (AASSLQS) is complementarity-determining-2. Residues 79–110 (GVPSRFSGSGSGTEFTLTISSLQPEDFATYYC) are framework-3. The segment at 111 to 117 (LQHNSYP) is complementarity-determining-3.

As to quaternary structure, immunoglobulins are composed of two identical heavy chains and two identical light chains; disulfide-linked.

It is found in the secreted. The protein resides in the cell membrane. In terms of biological role, v region of the variable domain of immunoglobulin light chains that participates in the antigen recognition. Immunoglobulins, also known as antibodies, are membrane-bound or secreted glycoproteins produced by B lymphocytes. In the recognition phase of humoral immunity, the membrane-bound immunoglobulins serve as receptors which, upon binding of a specific antigen, trigger the clonal expansion and differentiation of B lymphocytes into immunoglobulins-secreting plasma cells. Secreted immunoglobulins mediate the effector phase of humoral immunity, which results in the elimination of bound antigens. The antigen binding site is formed by the variable domain of one heavy chain, together with that of its associated light chain. Thus, each immunoglobulin has two antigen binding sites with remarkable affinity for a particular antigen. The variable domains are assembled by a process called V-(D)-J rearrangement and can then be subjected to somatic hypermutations which, after exposure to antigen and selection, allow affinity maturation for a particular antigen. This is Immunoglobulin kappa variable 1-17 from Homo sapiens (Human).